The following is a 706-amino-acid chain: MNSLFASTARGLEELLKSELEALGAHACKVVQGGVHFQGDDRLLYQSLLWSRLASRILLPLNEFRVHSDLDLYLGVQAIDWTSIFGVDKTFAVHFSGVNEEIRNSQYGALKVKDAIVDSFTRKIEQRPTVAKQQPDIRVNVFLQRDMASVALDLSGEGLHQRGYRDLTGQAPLKESLAAAIVQRSGWQPGTPMLDPMCGSGTLLIEAAMIASDRAPGLHRQHWGFTAWNGHNVDLWREVITEAQVRARRGLQETTSRFFGSDIDRRVIEMARGNARRAGVAELITFNVNDVAKLTNPLPEGPTGTVVCNPPYGERLESEPALIALHNMLGRIMKSAFGGWQLSLFSASPELLSCLQLRAERQFKAKNGPLDCVQKNYQLAENPLGAGGVQVAEDFANRLRKNLKKLDKWAKQQGIECYRLYDADLPEYNVAVDRYGSKVVVQEYAPPKTIDAQKARQRLFDVINATLAVLELPSNQLILKTRERQKGKNQYEKLAQKGEFLLVEEFNAKLWVNLTDYLDTGLFLDHRIARRMLGEMSKGKDFLNLFAYTGTASVHAGLGGARSTTTVDMSRTYLEWAEKNLRVNGLTGKQHRLIHADCLSWMQNADEQFDVIFIDPPTFSNSKRMENTFDVQRDHLALMQDLKRLLRRNGTIMFSNNKRGFQMDMAGLSALGLEAKEITAQTQSQDFARNRQIHNCWLLTHAGEGK.

The THUMP domain occupies 43 to 154; it reads LLYQSLLWSR…RDMASVALDL (112 aa).

Belongs to the methyltransferase superfamily. RlmKL family.

The protein resides in the cytoplasm. The catalysed reaction is guanosine(2445) in 23S rRNA + S-adenosyl-L-methionine = N(2)-methylguanosine(2445) in 23S rRNA + S-adenosyl-L-homocysteine + H(+). It carries out the reaction guanosine(2069) in 23S rRNA + S-adenosyl-L-methionine = N(2)-methylguanosine(2069) in 23S rRNA + S-adenosyl-L-homocysteine + H(+). Functionally, specifically methylates the guanine in position 2445 (m2G2445) and the guanine in position 2069 (m7G2069) of 23S rRNA. This Serratia proteamaculans (strain 568) protein is Ribosomal RNA large subunit methyltransferase K/L.